The following is a 471-amino-acid chain: Probable multidrug-efflux transporter MT1670 (471 aa).

The next 14 helical transmembrane spans lie at 23 to 43 (IVLAGGVALYATNEFLTISLL), 55 to 75 (LYAWVTTLYLVGSVVAATTVN), 91 to 111 (LAVFGLASLVCAAAPSMQILV), 116 to 136 (LQGIAGGLLAGLGYALINSTL), 146 to 166 (ALVSAMWGVATLIGPATGGLF), 174 to 194 (WAFGVMTLLTALMAMLVPVAL), 213 to 233 (VPVWSLLLMGAAALAISVAAL), 237 to 257 (LVQTAGLLAAAALLVAVFVVV), 279 to 299 (IYLTMSVQMIAAMVDTYVPLF), 308 to 328 (PVAAGFLGAALAVGWTVGEVA), 337 to 357 (VIGHVVAAAPLVMASGLALGA), 366 to 386 (VGIIALWALALLIIGTGIGIA), 410 to 430 (AINVVQLISGAFGAGLAGVVV), and 438 to 458 (VAAARGLYMAFTVLAAAGVIA).

This sequence belongs to the major facilitator superfamily.

The protein localises to the cell membrane. In terms of biological role, could be involved in fluoroquinolones efflux. The polypeptide is Probable multidrug-efflux transporter MT1670 (Mycobacterium tuberculosis (strain CDC 1551 / Oshkosh)).